We begin with the raw amino-acid sequence, 155 residues long: Small ribosomal subunit protein uS7 (155 aa).

This sequence belongs to the universal ribosomal protein uS7 family. As to quaternary structure, part of the 30S ribosomal subunit. Contacts proteins S9 and S11.

Its function is as follows. One of the primary rRNA binding proteins, it binds directly to 16S rRNA where it nucleates assembly of the head domain of the 30S subunit. Is located at the subunit interface close to the decoding center, probably blocks exit of the E-site tRNA. The sequence is that of Small ribosomal subunit protein uS7 from Helicobacter pylori (strain Shi470).